The following is a 360-amino-acid chain: Peptide chain release factor 1 (360 aa).

At Gln235 the chain carries N5-methylglutamine. The segment at 284–313 (AKRQQAEASTRRNLLGSGDRSDRNRTYNFP) is disordered.

It belongs to the prokaryotic/mitochondrial release factor family. Methylated by PrmC. Methylation increases the termination efficiency of RF1.

The protein resides in the cytoplasm. In terms of biological role, peptide chain release factor 1 directs the termination of translation in response to the peptide chain termination codons UAG and UAA. This is Peptide chain release factor 1 from Salmonella gallinarum (strain 287/91 / NCTC 13346).